A 76-amino-acid chain; its full sequence is Endothelin-1 (76 aa).

The endothelin-like stretch occupies residues 30–44 (CQCASQKDKKCWNFC).

It belongs to the endothelin/sarafotoxin family.

It localises to the secreted. In terms of biological role, endothelins are endothelium-derived vasoconstrictor peptides. Probable ligand for G-protein coupled receptors EDNRA and EDNRB which activates PTK2B, BCAR1, BCAR3 and, GTPases RAP1 and RHOA cascade in glomerular mesangial cells. Also binds the DEAR/FBXW7-AS1 receptor. Promotes mesenteric arterial wall remodeling via activation of ROCK signaling and subsequent colocalization of NFATC3 with F-actin filaments. NFATC3 then translocates to the nucleus where it subsequently promotes the transcription of the smooth muscle hypertrophy and differentiation marker ACTA2. This Macaca fascicularis (Crab-eating macaque) protein is Endothelin-1 (EDN1).